Consider the following 430-residue polypeptide: Enolase (430 aa).

Residue Gln165 coordinates (2R)-2-phosphoglycerate. Glu207 serves as the catalytic Proton donor. Asp244, Glu287, and Asp314 together coordinate Mg(2+). Lys339, Arg368, Ser369, and Lys390 together coordinate (2R)-2-phosphoglycerate. The active-site Proton acceptor is Lys339.

Belongs to the enolase family. Component of the RNA degradosome, a multiprotein complex involved in RNA processing and mRNA degradation. The cofactor is Mg(2+).

It localises to the cytoplasm. Its subcellular location is the secreted. The protein localises to the cell surface. It catalyses the reaction (2R)-2-phosphoglycerate = phosphoenolpyruvate + H2O. The protein operates within carbohydrate degradation; glycolysis; pyruvate from D-glyceraldehyde 3-phosphate: step 4/5. In terms of biological role, catalyzes the reversible conversion of 2-phosphoglycerate (2-PG) into phosphoenolpyruvate (PEP). It is essential for the degradation of carbohydrates via glycolysis. The chain is Enolase from Stenotrophomonas maltophilia (strain R551-3).